Consider the following 714-residue polypeptide: Fatty acid oxidation complex subunit alpha (714 aa).

Residues 1 to 190 (MEMASAFTLN…KLGLVDDVVP (190 aa)) are enoyl-CoA hydratase. A 3-hydroxyacyl-CoA dehydrogenase region spans residues 306-714 (APLNSVGILG…FWKTTATDLQ (409 aa)).

In the N-terminal section; belongs to the enoyl-CoA hydratase/isomerase family. The protein in the central section; belongs to the 3-hydroxyacyl-CoA dehydrogenase family. In terms of assembly, heterotetramer of two alpha chains (FadJ) and two beta chains (FadI).

The protein localises to the cytoplasm. The catalysed reaction is a (3S)-3-hydroxyacyl-CoA = a (2E)-enoyl-CoA + H2O. It catalyses the reaction a 4-saturated-(3S)-3-hydroxyacyl-CoA = a (3E)-enoyl-CoA + H2O. It carries out the reaction a (3S)-3-hydroxyacyl-CoA + NAD(+) = a 3-oxoacyl-CoA + NADH + H(+). The enzyme catalyses (3S)-3-hydroxybutanoyl-CoA = (3R)-3-hydroxybutanoyl-CoA. It participates in lipid metabolism; fatty acid beta-oxidation. In terms of biological role, catalyzes the formation of a hydroxyacyl-CoA by addition of water on enoyl-CoA. Also exhibits 3-hydroxyacyl-CoA epimerase and 3-hydroxyacyl-CoA dehydrogenase activities. This chain is Fatty acid oxidation complex subunit alpha, found in Escherichia coli O81 (strain ED1a).